The chain runs to 633 residues: Guanylate-binding protein 6 (633 aa).

A GTPase domain (Globular) region spans residues 1–310 (MESGPKMLAP…EAINSGAVPC (310 aa)). The region spanning 35–277 (SQPVVVVAIV…FCSYIFTHAR (243 aa)) is the GB1/RHD3-type G domain. GTP is bound by residues 45–52 (GLYRTGKS), 67–69 (LGS), and 97–101 (DTEGL).

The protein belongs to the TRAFAC class dynamin-like GTPase superfamily. GB1/RHD3 GTPase family. GB1 subfamily. Post-translationally, (Microbial infection) Ubiquitinated by S.flexneri IpaH9.8, leading to its degradation by the proteasome, thereby preventing its ability to promote host defense against bacterial infection.

The protein resides in the cytoplasmic vesicle. It catalyses the reaction GTP + H2O = GDP + phosphate + H(+). Interferon (IFN)-inducible GTPase that plays important roles in innate immunity against a diverse range of bacterial, viral and protozoan pathogens, such as bacterial pathogens Listeria monocytogenes and Mycobacterium bovis BCG as well as the protozoan pathogen Toxoplasma gondii. Confers protection to several pathogens, including the bacterial pathogens Listeria monocytogenes and Mycobacterium bovis BCG as well as the protozoan pathogen Toxoplasma gondii. The chain is Guanylate-binding protein 6 (GBP6) from Homo sapiens (Human).